The primary structure comprises 108 residues: Protein RnfH (108 aa).

The disordered stretch occupies residues 86–108 (ARRRRAEKAKEEGRANKVTGGRA).

It belongs to the UPF0125 (RnfH) family.

This chain is Protein RnfH, found in Pseudoalteromonas atlantica (strain T6c / ATCC BAA-1087).